Here is a 285-residue protein sequence, read N- to C-terminus: MPTRQSTSWVFTLNFEGEIPILPFNESVQYACWQHERVGHDHLQGFIQFKSRNTTLRQAKYIFNGLNPHLEIARDVEKAQLYAMKEDSRVAGPWEYGLFIKRGSHKRKLMERFEEDGEEMKIADPSLYRRCLSRKMAEEQRCSSEWNYDLRPWQEEVMHLLEEEPDYRTIIWVYGPAGNEGKSTFARHLSLKDGWGYLPGGKTQDMMHLVTAEPKNNWVFDIPRVSSEYVNYGVIEQVKNRVMVNTKYEPCVMRDDNHPVHVIVFANVLPDLGKLSEDRIKLIRC.

Residues 3–99 enclose the CRESS-DNA virus Rep endonuclease domain; sequence TRQSTSWVFT…VAGPWEYGLF (97 aa). The short motif at 10 to 13 is the RCR-1 element; the sequence is VFTL. The a divalent metal cation site is built by Glu-36 and His-42. Residues 42-44 carry the RCR-2 motif; sequence HLQ. A Nuclear localization signal motif is present at residues 52 to 74; that stretch reads RNTTLRQAKYIFNGLNPHLEIAR. Residue Tyr-82 is the For DNA cleavage activity of the active site. Residues 82–85 carry the RCR-3 motif; the sequence is YAMK. An a divalent metal cation-binding site is contributed by Asp-87. Residues 99–105 carry the Nuclear localization signal motif; sequence FIKRGSH. Residue 175–183 coordinates ATP; the sequence is GPAGNEGKS.

The protein belongs to the nanoviridea/circoviridae replication-associated protein family. In terms of assembly, homooligomer (Potential). Rep binds to repeated DNA motifs (iterons). Requires Mg(2+) as cofactor. Mn(2+) is required as a cofactor.

The protein localises to the host nucleus. It catalyses the reaction ATP + H2O = ADP + phosphate + H(+). In terms of biological role, initiates and terminates the replication only of its own subviral DNA molecule. The closed circular ssDNA genome is first converted to a superhelical dsDNA. Rep binds a specific hairpin at the genome origin of replication. Introduces an endonucleolytic nick within the intergenic region of the genome, thereby initiating the rolling circle replication (RCR). Following cleavage, binds covalently to the 5'-phosphate of DNA as a tyrosyl ester. The cleavage gives rise to a free 3'-OH that serves as a primer for the cellular DNA polymerase. The polymerase synthesizes the (+) strand DNA by rolling circle mechanism. After one round of replication, a Rep-catalyzed nucleotidyl transfer reaction releases a circular single-stranded virus genome, thereby terminating the replication. Displays origin-specific DNA cleavage, nucleotidyl transferase, ATPase and helicase activities. This Subterranean clover stunt C6 alphasatellite (SCSC6A) protein is Para-Rep C6 (C6).